The chain runs to 931 residues: Protocadherin gamma-B2 (931 aa).

Positions 1-30 (MKASSGRCGLVRWLQVLLPFLLSLFPGALP) are cleaved as a signal peptide. 6 Cadherin domains span residues 31–133 (VQIR…TPLF), 134–242 (KQTK…PPVF), 243–347 (SQDV…APEV), 348–452 (IVTS…APVF), 453–562 (QQTS…APRV), and 570–675 (DGSA…LPDL). The Extracellular segment spans residues 31-691 (VQIRYSIPEE…SDPQAELQFY (661 aa)). Residues Asn419 and Asn545 are each glycosylated (N-linked (GlcNAc...) asparagine). Residues 692–712 (LVVALALISVLFFLAVILAIS) traverse the membrane as a helical segment. Topologically, residues 713–931 (LRLRRSSRSD…KKKSGKKEKK (219 aa)) are cytoplasmic. Disordered regions lie at residues 814–840 (DWRFSQAQRPGTSGSQNGDDTGTWPNN) and 901–931 (ATLTNAAGKRDGKAPAGGNGNKKKSGKKEKK). Over residues 815–840 (WRFSQAQRPGTSGSQNGDDTGTWPNN) the composition is skewed to polar residues. The span at 921-931 (NKKKSGKKEKK) shows a compositional bias: basic residues.

It localises to the cell membrane. Functionally, potential calcium-dependent cell-adhesion protein. May be involved in the establishment and maintenance of specific neuronal connections in the brain. The protein is Protocadherin gamma-B2 (PCDHGB2) of Pan troglodytes (Chimpanzee).